The chain runs to 278 residues: MAIRKYKPTTPGRRGSSVADFSEITRSTPEKSLIRPLHGTGGRNAHGRITTRHKGGGHKRAYRLIDFRRHDKDGVNAKVAHIEYDPNRTARIALLHFLDGEKRYIIAPVGLSQGDVVESGANADIKPGNNLPLRNIPTGTTVHAVELRPGGGAKLARSAGSGIQLLGKEGAYASLRMPSGEIRRVDVRCRATVGEVGNAEQANINWGKAGRMRWKGKRPTVRGVVMNPVDHPHGGGEGKTSGGRHPVSPWGKPEGRTRKPNKASDKLIVRRRRTGKKR.

Disordered stretches follow at residues 33–57 and 224–278; these read LIRP…KGGG and VVMN…GKKR. A compositionally biased stretch (basic residues) spans 45–57; it reads AHGRITTRHKGGG. The segment covering 253 to 268 has biased composition (basic and acidic residues); it reads PEGRTRKPNKASDKLI. A compositionally biased stretch (basic residues) spans 269 to 278; sequence VRRRRTGKKR.

Belongs to the universal ribosomal protein uL2 family. In terms of assembly, part of the 50S ribosomal subunit. Forms a bridge to the 30S subunit in the 70S ribosome.

In terms of biological role, one of the primary rRNA binding proteins. Required for association of the 30S and 50S subunits to form the 70S ribosome, for tRNA binding and peptide bond formation. It has been suggested to have peptidyltransferase activity; this is somewhat controversial. Makes several contacts with the 16S rRNA in the 70S ribosome. The chain is Large ribosomal subunit protein uL2 from Mycobacteroides abscessus (strain ATCC 19977 / DSM 44196 / CCUG 20993 / CIP 104536 / JCM 13569 / NCTC 13031 / TMC 1543 / L948) (Mycobacterium abscessus).